We begin with the raw amino-acid sequence, 248 residues long: Pyridoxine 5'-phosphate synthase (248 aa).

Residues Asn-8 and Arg-19 each coordinate 3-amino-2-oxopropyl phosphate. His-44 serves as the catalytic Proton acceptor. The 1-deoxy-D-xylulose 5-phosphate site is built by Arg-46 and His-51. Glu-76 serves as the catalytic Proton acceptor. Residue Thr-106 participates in 1-deoxy-D-xylulose 5-phosphate binding. His-200 (proton donor) is an active-site residue. 3-amino-2-oxopropyl phosphate is bound by residues Asp-201 and 223 to 224 (GH).

Belongs to the PNP synthase family. As to quaternary structure, homooctamer; tetramer of dimers.

The protein resides in the cytoplasm. It catalyses the reaction 3-amino-2-oxopropyl phosphate + 1-deoxy-D-xylulose 5-phosphate = pyridoxine 5'-phosphate + phosphate + 2 H2O + H(+). It functions in the pathway cofactor biosynthesis; pyridoxine 5'-phosphate biosynthesis; pyridoxine 5'-phosphate from D-erythrose 4-phosphate: step 5/5. Its function is as follows. Catalyzes the complicated ring closure reaction between the two acyclic compounds 1-deoxy-D-xylulose-5-phosphate (DXP) and 3-amino-2-oxopropyl phosphate (1-amino-acetone-3-phosphate or AAP) to form pyridoxine 5'-phosphate (PNP) and inorganic phosphate. The protein is Pyridoxine 5'-phosphate synthase of Chelativorans sp. (strain BNC1).